A 384-amino-acid polypeptide reads, in one-letter code: FAD-dependent urate hydroxylase (384 aa).

FAD-binding positions include Gly-11, 30 to 31 (EA), Ser-43, and Val-125. Substrate-binding positions include Asn-178, Arg-204, and 216-218 (YFF). FAD is bound by residues Asp-285 and 295–299 (GQGGC).

Belongs to the FAD-dependent urate hydroxylase family. Monomer. FAD is required as a cofactor.

It catalyses the reaction urate + NADH + O2 + H(+) = 5-hydroxyisourate + NAD(+) + H2O. It functions in the pathway purine metabolism; urate degradation. Functionally, catalyzes the hydroxylation of urate to 5-hydroxyisourate (HIU). This is FAD-dependent urate hydroxylase from Klebsiella pneumoniae subsp. pneumoniae (strain ATCC 700721 / MGH 78578).